The primary structure comprises 239 residues: Bradykinin-potentiating and C-type natriuretic peptides (239 aa).

An N-terminal signal peptide occupies residues 1–23; that stretch reads MFVSRLAASGLLLLALLAVSLDG. Propeptides lie at residues 24–33 and 43–49; these read KPVQQWSHKG and LVVQQWS. Gln-50 bears the Pyrrolidone carboxylic acid mark. Positions 62–64 are excised as a propeptide; it reads VVV. Gln-65 is subject to Pyrrolidone carboxylic acid. A propeptide spanning residues 76–82 is cleaved from the precursor; that stretch reads LVVQQWS. At Gln-83 the chain carries Pyrrolidone carboxylic acid. Positions 95-97 are excised as a propeptide; sequence LVV. Gln-98 carries the pyrrolidone carboxylic acid modification. 2 consecutive propeptides follow at residues 109–136 and 148–217; these read LLKPHESPAGGTTALREELSLGPEAALD and GSKA…LAKK. Residues 132 to 205 form a disordered region; it reads EAALDTPPAG…HHAVGGGGGG (74 aa). The span at 161–171 shows a compositional bias: low complexity; the sequence is SKGASATSAAS. Residues 173–183 are compositionally biased toward basic and acidic residues; sequence PMRDLRTDGKQ. Residues Cys-223 and Cys-239 are joined by a disulfide bond.

It in the N-terminal section; belongs to the bradykinin-potentiating peptide family. The protein in the central section; belongs to the bradykinin inhibitor peptide family. In the C-terminal section; belongs to the natriuretic peptide family. Expressed by the venom gland.

The protein localises to the secreted. Bradykinin-potentiating peptides both inhibit the activity of the angiotensin-converting enzyme (ACE) and enhances the action of bradykinin by inhibiting the peptidases that inactivate it. They act as indirect hypotensive agent. Functionally, inhibits angiotensin-converting enzyme (ACE) activity (IC(50)=4.25 uM), preventing the release of angiotensin and thus indirectly contributing to hypotension. In vivo, induce hypotensive response in both normotensive and hypertensive rats. Its function is as follows. antagonizes the vasodilatory actions of bradykinin at the B2 bradykinin receptor (BDKRB2). In terms of biological role, has a vasorelaxant activity in rat aortic strips and a diuretic potency in anesthetized rats. May act by activating natriuretic receptors (NPR1 and/or NPR2). The sequence is that of Bradykinin-potentiating and C-type natriuretic peptides from Lachesis muta muta (Bushmaster).